A 198-amino-acid chain; its full sequence is Synaptobrevin homolog YKT6-B (198 aa).

Positions 8–127 (VLYKGENKVH…IQYNALDSYL (120 aa)) constitute a Longin domain. The region spanning 138 to 198 (PMSKVQAELD…RKQNSCCDIM (61 aa)) is the v-SNARE coiled-coil homology domain. Cysteine 194 is lipidated: S-palmitoyl cysteine. The residue at position 195 (cysteine 195) is a Cysteine methyl ester. Cysteine 195 is lipidated: S-farnesyl cysteine. Positions 196 to 198 (DIM) are cleaved as a propeptide — removed in mature form.

Belongs to the synaptobrevin family. In terms of processing, palmitoylated; catalyzes its own palmitoylation. Palmitoylation is required for Golgi targeting. Post-translationally, farnesylation is required for Golgi targeting.

The protein resides in the cytoplasm. The protein localises to the cytosol. It is found in the cytoplasmic vesicle membrane. It localises to the golgi apparatus membrane. In terms of biological role, vesicular soluble NSF attachment protein receptor (v-SNARE) mediating vesicle docking and fusion to a specific acceptor cellular compartment. Functions in endoplasmic reticulum to Golgi transport; as part of a SNARE complex composed of GOSR1, GOSR2 and STX5. Functions in early/recycling endosome to TGN transport; as part of a SNARE complex composed of BET1L, GOSR1 and STX5. Has a S-palmitoyl transferase activity. The protein is Synaptobrevin homolog YKT6-B (ykt6-b) of Xenopus laevis (African clawed frog).